We begin with the raw amino-acid sequence, 628 residues long: MSPGGKFDFDDGGCYVGGWEAGRAHGYGVCTGPGAQGEYSGCWAHGFESLGVFTGPGGHSYQGHWQQGKREGLGVERKSRWTYRGEWLGGLKGRSGVWESVSGLRYAGLWKDGFQDGYGTETYSDGGTYQGQWQAGKRHGYGVRQSVPYHQAALLRSPRRTSLDSGHSDPPTPPPPLPLPGDEGGSPASGSRGGFVLAGPGDADGASSRKRTPAAGGFFRRSLLLSGLRAGGRRSSLGSKRGSLRSEVSSEVGSTGPPGSEASGPPAAAPPALIEGSATEVYAGEWRADRRSGFGVSQRSNGLRYEGEWLGNRRHGYGRTTRPDGSREEGKYKRNRLVHGGRVRSLLPLALRRGKVKEKVDRAVEGARRAVSAARQRQEIAAARAADALLKAVAASSVAEKAVEAARMAKLIAQDLQPMLEAPGRRPRQDSEGSDTEPLDEDSPGVYENGLTPSEGSPELPSSPASSRQPWRPPACRSPLPPGGDQGPFSSPKAWPEEWGGAGAQAEELAGYEAEDEAGMQGPGPRDGSPLLGGCSDSSGSLREEEGEDEEPLPPLRAPAGTEPEPIAMLVLRGSSSRGPDAGCLTEELGEPAATERPAQPGAANPLVVGAVALLDLSLAFLFSQLLT.

Residues 1–606 (MSPGGKFDFD…RPAQPGAANP (606 aa)) lie on the Cytoplasmic side of the membrane. 6 MORN repeats span residues 50-72 (LGVF…KREG), 74-95 (GVER…KGRS), 96-117 (GVWE…FQDG), 118-140 (YGTE…KRHG), 141-163 (YGVR…RTSL), and 164-186 (DSGH…EGGS). Disordered stretches follow at residues 158 to 214 (PRRT…RTPA) and 231 to 276 (GGRR…LIEG). Pro residues predominate over residues 170–179 (PPTPPPPLPL). Composition is skewed to low complexity over residues 231–241 (GGRRSSLGSKR) and 253–272 (GSTG…APPA). MORN repeat units follow at residues 317-339 (YGRT…RLVH) and 340-362 (GGRV…KVDR). Positions 415 to 602 (DLQPMLEAPG…AATERPAQPG (188 aa)) are disordered. The segment covering 432-443 (EGSDTEPLDEDS) has biased composition (acidic residues). Low complexity-rich tracts occupy residues 453 to 467 (PSEG…PASS) and 528 to 541 (GSPL…SSGS). A helical; Anchor for type IV membrane protein transmembrane segment spans residues 607 to 628 (LVVGAVALLDLSLAFLFSQLLT).

The protein belongs to the junctophilin family.

It localises to the cell membrane. Its subcellular location is the endoplasmic reticulum membrane. Its function is as follows. Junctophilins contribute to the formation of junctional membrane complexes (JMCs) which link the plasma membrane with the endoplasmic or sarcoplasmic reticulum in excitable cells. Provides a structural foundation for functional cross-talk between the cell surface and intracellular calcium release channels. JPH4 is brain-specific and appears to have an active role in certain neurons involved in motor coordination and memory. The polypeptide is Junctophilin-4 (JPH4) (Homo sapiens (Human)).